Here is a 475-residue protein sequence, read N- to C-terminus: Ribulose bisphosphate carboxylase large chain (475 aa).

Residues 1–2 (MS) constitute a propeptide that is removed on maturation. N-acetylproline is present on P3. K14 is subject to N6,N6,N6-trimethyllysine. Substrate is bound by residues N123 and T173. K175 acts as the Proton acceptor in catalysis. A substrate-binding site is contributed by K177. 3 residues coordinate Mg(2+): K201, D203, and E204. K201 is modified (N6-carboxylysine). Residue H294 is the Proton acceptor of the active site. Positions 295, 327, and 379 each coordinate substrate.

It belongs to the RuBisCO large chain family. Type I subfamily. As to quaternary structure, heterohexadecamer of 8 large chains and 8 small chains. Mg(2+) is required as a cofactor.

Its subcellular location is the plastid. It catalyses the reaction 2 (2R)-3-phosphoglycerate + 2 H(+) = D-ribulose 1,5-bisphosphate + CO2 + H2O. The enzyme catalyses D-ribulose 1,5-bisphosphate + O2 = 2-phosphoglycolate + (2R)-3-phosphoglycerate + 2 H(+). In terms of biological role, ruBisCO catalyzes two reactions: the carboxylation of D-ribulose 1,5-bisphosphate, the primary event in carbon dioxide fixation, as well as the oxidative fragmentation of the pentose substrate in the photorespiration process. Both reactions occur simultaneously and in competition at the same active site. This chain is Ribulose bisphosphate carboxylase large chain, found in Aneura mirabilis (Parasitic liverwort).